The chain runs to 244 residues: LOB domain-containing protein 17 (244 aa).

Positions 6–108 constitute an LOB domain; the sequence is SPCGACKFLR…TQLEILKQQA (103 aa).

The protein belongs to the LOB domain-containing protein family. As to expression, expressed in roots, stems, leaves and flowers.

The chain is LOB domain-containing protein 17 (LBD17) from Arabidopsis thaliana (Mouse-ear cress).